Consider the following 184-residue polypeptide: Protein GrpE (184 aa).

Positions 1–12 (MADEQLNEKDLN) are enriched in basic and acidic residues. Positions 1-22 (MADEQLNEKDLNAEEAGAVDNG) are disordered.

This sequence belongs to the GrpE family. Homodimer.

Its subcellular location is the cytoplasm. In terms of biological role, participates actively in the response to hyperosmotic and heat shock by preventing the aggregation of stress-denatured proteins, in association with DnaK and GrpE. It is the nucleotide exchange factor for DnaK and may function as a thermosensor. Unfolded proteins bind initially to DnaJ; upon interaction with the DnaJ-bound protein, DnaK hydrolyzes its bound ATP, resulting in the formation of a stable complex. GrpE releases ADP from DnaK; ATP binding to DnaK triggers the release of the substrate protein, thus completing the reaction cycle. Several rounds of ATP-dependent interactions between DnaJ, DnaK and GrpE are required for fully efficient folding. This is Protein GrpE from Pseudomonas putida (strain W619).